The primary structure comprises 382 residues: Methylthioribose-1-phosphate isomerase (382 aa).

Catalysis depends on D261, which acts as the Proton donor.

This sequence belongs to the eIF-2B alpha/beta/delta subunits family. MtnA subfamily.

The protein localises to the cytoplasm. Its subcellular location is the nucleus. It carries out the reaction 5-(methylsulfanyl)-alpha-D-ribose 1-phosphate = 5-(methylsulfanyl)-D-ribulose 1-phosphate. It participates in amino-acid biosynthesis; L-methionine biosynthesis via salvage pathway; L-methionine from S-methyl-5-thio-alpha-D-ribose 1-phosphate: step 1/6. Its function is as follows. Catalyzes the interconversion of methylthioribose-1-phosphate (MTR-1-P) into methylthioribulose-1-phosphate (MTRu-1-P). The sequence is that of Methylthioribose-1-phosphate isomerase from Ricinus communis (Castor bean).